Here is a 695-residue protein sequence, read N- to C-terminus: Polyribonucleotide nucleotidyltransferase (695 aa).

Aspartate 486 and aspartate 492 together coordinate Mg(2+). One can recognise a KH domain in the interval 553-612; the sequence is PRMIVFKINPEKIRDVIGKGGATIRALTEETGTTIDIVDDGTVKIFSADKADGQEAKRRV. The S1 motif domain maps to 622-690; sequence GKIYEGRVSR…KQGRVRLSVK (69 aa).

It belongs to the polyribonucleotide nucleotidyltransferase family. In terms of assembly, component of the RNA degradosome, which is a multiprotein complex involved in RNA processing and mRNA degradation. Requires Mg(2+) as cofactor.

The protein localises to the cytoplasm. It catalyses the reaction RNA(n+1) + phosphate = RNA(n) + a ribonucleoside 5'-diphosphate. Its function is as follows. Involved in mRNA degradation. Catalyzes the phosphorolysis of single-stranded polyribonucleotides processively in the 3'- to 5'-direction. The protein is Polyribonucleotide nucleotidyltransferase of Nitrosococcus oceani (strain ATCC 19707 / BCRC 17464 / JCM 30415 / NCIMB 11848 / C-107).